The primary structure comprises 938 residues: Auxilin (938 aa).

The interval 19-41 (AAAGENRMKDSENKGASSPDMEP) is disordered. Repeat copies occupy residues 61-64 (NLKD), 65-68 (NLKD), and 69-72 (TLKD). Positions 61 to 72 (NLKDNLKDTLKD) are 3 X 4 AA approximate tandem repeats. Residues 80–247 (SVSSYTKGDL…GYMCDLLADK (168 aa)) enclose the Phosphatase tensin-type domain. A Phosphoserine modification is found at S137. Residue C189 is the Phosphocysteine intermediate of the active site. In terms of domain architecture, C2 tensin-type spans 253–391 (FKPLTIKAIT…FQVTLDIEVQ (139 aa)). Residues 434 to 442 (PADLPPDHP) carry the SH3-binding motif. The segment at 467–801 (EEDHAALVNQ…GKGSTNLEGK (335 aa)) is disordered. Phosphoserine occurs at positions 478 and 481. Positions 531–548 (DVSTNFSSLAAPPSNSEL) are enriched in polar residues. Residues 559–569 (TGPAQAGQAGV) show a composition bias toward low complexity. Composition is skewed to polar residues over residues 579 to 596 (VSAQSTPRRTATSASASP) and 624 to 654 (FLNTSSASSDPFLQPTRSPSPTVHASSTPAV). S595 carries the post-translational modification Phosphoserine. Residues 679–694 (SAATSPTGSSHGTPTH) are compositionally biased toward low complexity. The span at 754–781 (NWQQTQSKPQSSMPHSSPQNRPNYNVSF) shows a compositional bias: polar residues. The J domain maps to 874-938 (TKWKPVGMAD…FENQGQKPLY (65 aa)).

As to quaternary structure, forms a complex composed of HSPA8, CLTC and DNAJC6. Interacts with HSPA8/HSC70 in an ATP-dependent manner; this interaction stimulates the HSPA8's ATPase activity. Interacts with CLTC; this interaction produces a local change in heavy-chain contacts, creating a detectable global distortion of the clathrin coat. Interacts with AP2A2. Interacts with DNM1(GTP-bound form); this interaction allows clathrin-coated vesicle (CCV) formation at the plasma membrane. Post-translationally, the N-terminus is blocked. In terms of processing, phosphorylation at Ser-595 modulates its ability to bind CLTC and therefore the synaptic vesicle endocytosis (SVE).

It is found in the cytoplasmic vesicle. The protein resides in the clathrin-coated vesicle. Functionally, may act as a protein phosphatase and/or a lipid phosphatase. Co-chaperone that recruits HSPA8/HSC70 to clathrin-coated vesicles (CCVs) and promotes the ATP-dependent dissociation of clathrin from CCVs and participates in clathrin-mediated endocytosis of synaptic vesicles and their recycling and also in intracellular trafficking. Firstly, binds tightly to the clathrin cages, at a ratio of one DNAJC6 per clathrin triskelion. The HSPA8:ATP complex then binds to the clathrin-auxilin cage, initially at a ratio of one HSPA8 per triskelion leading to ATP hydrolysis stimulation and causing a conformational change in the HSPA8. This cycle is repeated three times to drive to a complex containing the clathrin-auxilin cage associated to three HSPA8:ADP complex. The ATP hydrolysis of the third HSPA8:ATP complex leads to a concerted dismantling of the cage into component triskelia. Then, dissociates from the released triskelia and be recycled to initiate another cycle of HSPA8's recruitment. Also acts during the early steps of clathrin-coated vesicle (CCV) formation through its interaction with the GTP bound form of DNM1. This Mus musculus (Mouse) protein is Auxilin.